The following is a 150-amino-acid chain: UPF0735 ACT domain-containing protein Helmi_18680 (150 aa).

Residues 72-147 form the ACT domain; that stretch reads SVSLLLEHHP…GVRSAQLVGS (76 aa).

This sequence belongs to the UPF0735 family.

In Heliobacterium modesticaldum (strain ATCC 51547 / Ice1), this protein is UPF0735 ACT domain-containing protein Helmi_18680.